The following is a 773-amino-acid chain: Serine/threonine-protein kinase CBK1 (773 aa).

Composition is skewed to polar residues over residues 50-59 (LHDQYSSHME) and 178-217 (GNYN…SPQR). Disordered regions lie at residues 50 to 111 (LHDQ…GGNI) and 177 to 275 (NGNY…QQQQ). 2 stretches are compositionally biased toward low complexity: residues 218 to 256 (QPAQ…QQQP) and 265 to 275 (QQTQLQQQQQQ). In terms of domain architecture, Protein kinase spans 370–686 (FHTVQVIGKG…ADEIKSHPFF (317 aa)). ATP contacts are provided by residues 376–384 (IGKGAFGEV) and Lys-399. The Proton acceptor role is filled by Asp-493. One can recognise an AGC-kinase C-terminal domain in the interval 687-771 (RGVDWNTIRQ…SRFDYLTRKN (85 aa)).

Belongs to the protein kinase superfamily. STE Ser/Thr protein kinase family. COT1 subfamily.

The enzyme catalyses L-seryl-[protein] + ATP = O-phospho-L-seryl-[protein] + ADP + H(+). It catalyses the reaction L-threonyl-[protein] + ATP = O-phospho-L-threonyl-[protein] + ADP + H(+). In terms of biological role, protein kinase that seems to play a role in the regulation of cell morphogenesis and proliferation. The polypeptide is Serine/threonine-protein kinase CBK1 (CBK1) (Candida glabrata (strain ATCC 2001 / BCRC 20586 / JCM 3761 / NBRC 0622 / NRRL Y-65 / CBS 138) (Yeast)).